Reading from the N-terminus, the 613-residue chain is DBH-like monooxygenase protein 1 (613 aa).

A signal peptide spans methionine 1 to glycine 19. Topologically, residues glycine 20–aspartate 592 are lumenal. The DOMON domain occupies glycine 35 to histidine 148. Residue asparagine 114 is glycosylated (N-linked (GlcNAc...) asparagine). Residue tyrosine 203 is part of the active site. Intrachain disulfides connect cysteine 205–cysteine 257 and cysteine 242–cysteine 269. Histidine 235 and histidine 236 together coordinate Cu cation. Asparagine 247 carries N-linked (GlcNAc...) asparagine glycosylation. Residues histidine 307, histidine 389, histidine 391, and methionine 464 each coordinate Cu cation. Disulfide bonds link cysteine 364–cysteine 480, cysteine 368–cysteine 550, and cysteine 443–cysteine 465. Histidine 389 is a catalytic residue. Residues asparagine 476 and asparagine 517 are each glycosylated (N-linked (GlcNAc...) asparagine). A helical transmembrane segment spans residues phenylalanine 593–leucine 613.

The protein belongs to the copper type II ascorbate-dependent monooxygenase family. It depends on Cu(2+) as a cofactor. N-glycosylated. Highly expressed in lung, kidney, brain and spinal cord.

The protein localises to the endoplasmic reticulum membrane. This chain is DBH-like monooxygenase protein 1 (MOXD1), found in Homo sapiens (Human).